The chain runs to 492 residues: Catalase isozyme 1 (492 aa).

Active-site residues include His-65 and Asn-138. Tyr-348 contacts heme.

The protein belongs to the catalase family. In terms of assembly, homotetramer. The cofactor is heme. In terms of tissue distribution, in whole endosperms (aleurones plus starchy endosperm), in isolated aleurones and in developing seeds.

It is found in the peroxisome. The protein localises to the glyoxysome. It catalyses the reaction 2 H2O2 = O2 + 2 H2O. Functionally, occurs in almost all aerobically respiring organisms and serves to protect cells from the toxic effects of hydrogen peroxide. The protein is Catalase isozyme 1 (CAT1) of Hordeum vulgare (Barley).